The following is a 492-amino-acid chain: Ketol-acid reductoisomerase (NADP(+)) (492 aa).

The 194-residue stretch at 15–208 (AQLGKCRFMA…GGHRAGVLEF (194 aa)) folds into the KARI N-terminal Rossmann domain. NADP(+) contacts are provided by residues 45-48 (CGAQ), arginine 68, arginine 76, serine 78, and 108-110 (DKQ). Histidine 132 is an active-site residue. Position 158 (glycine 158) interacts with NADP(+). 2 KARI C-terminal knotted domains span residues 209–344 (SFVA…NAPQ) and 345–485 (FEGK…MTDM). Mg(2+) contacts are provided by aspartate 217, glutamate 221, glutamate 389, and glutamate 393. Substrate is bound at residue serine 414.

It belongs to the ketol-acid reductoisomerase family. It depends on Mg(2+) as a cofactor.

It catalyses the reaction (2R)-2,3-dihydroxy-3-methylbutanoate + NADP(+) = (2S)-2-acetolactate + NADPH + H(+). The enzyme catalyses (2R,3R)-2,3-dihydroxy-3-methylpentanoate + NADP(+) = (S)-2-ethyl-2-hydroxy-3-oxobutanoate + NADPH + H(+). It functions in the pathway amino-acid biosynthesis; L-isoleucine biosynthesis; L-isoleucine from 2-oxobutanoate: step 2/4. Its pathway is amino-acid biosynthesis; L-valine biosynthesis; L-valine from pyruvate: step 2/4. Involved in the biosynthesis of branched-chain amino acids (BCAA). Catalyzes an alkyl-migration followed by a ketol-acid reduction of (S)-2-acetolactate (S2AL) to yield (R)-2,3-dihydroxy-isovalerate. In the isomerase reaction, S2AL is rearranged via a Mg-dependent methyl migration to produce 3-hydroxy-3-methyl-2-ketobutyrate (HMKB). In the reductase reaction, this 2-ketoacid undergoes a metal-dependent reduction by NADPH to yield (R)-2,3-dihydroxy-isovalerate. This Yersinia pestis bv. Antiqua (strain Antiqua) protein is Ketol-acid reductoisomerase (NADP(+)).